Consider the following 301-residue polypeptide: Pyridoxal 5'-phosphate synthase subunit PdxS (301 aa).

D31 contacts D-ribose 5-phosphate. K88 acts as the Schiff-base intermediate with D-ribose 5-phosphate in catalysis. D-ribose 5-phosphate is bound at residue G160. A D-glyceraldehyde 3-phosphate-binding site is contributed by R172. Residues G221 and 242–243 each bind D-ribose 5-phosphate; that span reads GS. The interval 273-301 is disordered; that stretch reads EIAKSPGKGMKGQANETLPEEEKLQDRGI. Positions 292 to 301 are enriched in basic and acidic residues; the sequence is EEEKLQDRGI.

The protein belongs to the PdxS/SNZ family. In terms of assembly, in the presence of PdxT, forms a dodecamer of heterodimers.

The catalysed reaction is aldehydo-D-ribose 5-phosphate + D-glyceraldehyde 3-phosphate + L-glutamine = pyridoxal 5'-phosphate + L-glutamate + phosphate + 3 H2O + H(+). Its pathway is cofactor biosynthesis; pyridoxal 5'-phosphate biosynthesis. Catalyzes the formation of pyridoxal 5'-phosphate from ribose 5-phosphate (RBP), glyceraldehyde 3-phosphate (G3P) and ammonia. The ammonia is provided by the PdxT subunit. Can also use ribulose 5-phosphate and dihydroxyacetone phosphate as substrates, resulting from enzyme-catalyzed isomerization of RBP and G3P, respectively. The protein is Pyridoxal 5'-phosphate synthase subunit PdxS of Natronomonas pharaonis (strain ATCC 35678 / DSM 2160 / CIP 103997 / JCM 8858 / NBRC 14720 / NCIMB 2260 / Gabara) (Halobacterium pharaonis).